Reading from the N-terminus, the 334-residue chain is Thiamine-binding periplasmic protein (334 aa).

An N-terminal signal peptide occupies residues 1 to 23; sequence MRLLSLLTFSLFAVIGLAPAAQA. Residues 64-65, 166-167, Trp202, and 220-223 contribute to the thiamine site; these read DG, AT, and YTTS.

This sequence belongs to the bacterial solute-binding protein 1 family. As to quaternary structure, the complex is composed of two ATP-binding proteins (ThiQ), two transmembrane proteins (ThiP) and a solute-binding protein (ThiB).

It is found in the periplasm. Its function is as follows. Part of the ABC transporter complex ThiBPQ involved in thiamine import. This chain is Thiamine-binding periplasmic protein (thiB), found in Brucella melitensis biotype 1 (strain ATCC 23456 / CCUG 17765 / NCTC 10094 / 16M).